A 456-amino-acid chain; its full sequence is Protein king tubby (456 aa).

The segment at 111–202 (HELEDEESSP…SNGAGGESEG (92 aa)) is disordered. A compositionally biased stretch (polar residues) spans 120–152 (PVTVIEQQQTAPHSANSTHSQRPSTTRQPSFND). Residue Ser-149 is modified to Phosphoserine.

The protein belongs to the TUB family.

It localises to the cytoplasm. The protein resides in the nucleus. Its subcellular location is the cell projection. The protein localises to the cilium membrane. It is found in the rhabdomere. In Drosophila pseudoobscura pseudoobscura (Fruit fly), this protein is Protein king tubby.